A 177-amino-acid chain; its full sequence is ATP synthase subunit delta (177 aa).

The protein belongs to the ATPase delta chain family. F-type ATPases have 2 components, F(1) - the catalytic core - and F(0) - the membrane proton channel. F(1) has five subunits: alpha(3), beta(3), gamma(1), delta(1), epsilon(1). F(0) has three main subunits: a(1), b(2) and c(10-14). The alpha and beta chains form an alternating ring which encloses part of the gamma chain. F(1) is attached to F(0) by a central stalk formed by the gamma and epsilon chains, while a peripheral stalk is formed by the delta and b chains.

The protein resides in the cell inner membrane. In terms of biological role, f(1)F(0) ATP synthase produces ATP from ADP in the presence of a proton or sodium gradient. F-type ATPases consist of two structural domains, F(1) containing the extramembraneous catalytic core and F(0) containing the membrane proton channel, linked together by a central stalk and a peripheral stalk. During catalysis, ATP synthesis in the catalytic domain of F(1) is coupled via a rotary mechanism of the central stalk subunits to proton translocation. This protein is part of the stalk that links CF(0) to CF(1). It either transmits conformational changes from CF(0) to CF(1) or is implicated in proton conduction. The polypeptide is ATP synthase subunit delta (Herminiimonas arsenicoxydans).